A 364-amino-acid chain; its full sequence is Pectinesterase (364 aa).

Positions Met-1–Ser-22 are cleaved as a signal peptide. Asn-103 carries an N-linked (GlcNAc...) asparagine glycan. Asp-220 is an active-site residue.

It is found in the secreted. It catalyses the reaction [(1-&gt;4)-alpha-D-galacturonosyl methyl ester](n) + n H2O = [(1-&gt;4)-alpha-D-galacturonosyl](n) + n methanol + n H(+). The protein operates within glycan metabolism; pectin degradation; 2-dehydro-3-deoxy-D-gluconate from pectin: step 1/5. In terms of biological role, catalyzes the demethylesterification of homogalacturonan components of pectin. In Parthenium hysterophorus (Santa Maria feverfew), this protein is Pectinesterase.